A 271-amino-acid polypeptide reads, in one-letter code: Protein ABHD14A (271 aa).

The helical; Signal-anchor for type II membrane protein transmembrane segment at 35 to 55 (VALLGLSLLLMLLLYVGLPGP) threads the bilayer. A glycan (N-linked (GlcNAc...) asparagine) is linked at N67. The active-site Charge relay system is S171. N201 carries an N-linked (GlcNAc...) asparagine glycan. Residues D222 and H249 each act as charge relay system in the active site.

Belongs to the AB hydrolase superfamily. ABHD14 family.

The protein resides in the cytoplasm. It localises to the membrane. In terms of biological role, possible role in granule neuron development. The sequence is that of Protein ABHD14A from Homo sapiens (Human).